The chain runs to 926 residues: LPS-assembly protein LptD (926 aa).

The signal sequence occupies residues Met-1–Ala-22. The interval Val-58–Gly-99 is disordered. The span at Thr-68–Gly-85 shows a compositional bias: low complexity.

It belongs to the LptD family. Component of the lipopolysaccharide transport and assembly complex. Interacts with LptE and LptA.

It is found in the cell outer membrane. Together with LptE, is involved in the assembly of lipopolysaccharide (LPS) at the surface of the outer membrane. In Pseudomonas savastanoi pv. phaseolicola (strain 1448A / Race 6) (Pseudomonas syringae pv. phaseolicola (strain 1448A / Race 6)), this protein is LPS-assembly protein LptD.